The sequence spans 236 residues: Purine nucleoside phosphorylase DeoD-type (236 aa).

His5 contacts a purine D-ribonucleoside. Residues Gly21, Arg25, Arg44, and 88–91 (RVGT) contribute to the phosphate site. Residues 180 to 182 (EME) and 204 to 205 (SD) contribute to the a purine D-ribonucleoside site. Asp205 (proton donor) is an active-site residue.

The protein belongs to the PNP/UDP phosphorylase family. In terms of assembly, homohexamer; trimer of homodimers.

It catalyses the reaction a purine D-ribonucleoside + phosphate = a purine nucleobase + alpha-D-ribose 1-phosphate. The catalysed reaction is a purine 2'-deoxy-D-ribonucleoside + phosphate = a purine nucleobase + 2-deoxy-alpha-D-ribose 1-phosphate. Catalyzes the reversible phosphorolytic breakdown of the N-glycosidic bond in the beta-(deoxy)ribonucleoside molecules, with the formation of the corresponding free purine bases and pentose-1-phosphate. In Shewanella baltica (strain OS155 / ATCC BAA-1091), this protein is Purine nucleoside phosphorylase DeoD-type.